Consider the following 185-residue polypeptide: Ribosome-recycling factor (185 aa).

This sequence belongs to the RRF family.

Its subcellular location is the cytoplasm. Functionally, responsible for the release of ribosomes from messenger RNA at the termination of protein biosynthesis. May increase the efficiency of translation by recycling ribosomes from one round of translation to another. This chain is Ribosome-recycling factor, found in Streptomyces avermitilis (strain ATCC 31267 / DSM 46492 / JCM 5070 / NBRC 14893 / NCIMB 12804 / NRRL 8165 / MA-4680).